The sequence spans 500 residues: NAD(P)H-quinone oxidoreductase chain 4, chloroplastic (500 aa).

Helical transmembrane passes span 4–24 (FPWL…ILFI), 37–57 (ICIC…NFQL), 80–100 (LGID…TTLA), 134–154 (LLLF…LLSM), 167–187 (FILY…GMGL), 208–228 (GLEI…PPII), 242–262 (HYST…YGLV), 272–292 (AHSL…IYAA), 330–350 (GAIL…FLAG), 386–406 (LASP…GIIT), 416–436 (ILIT…LLSM), and 462–482 (IFIL…PDFV).

This sequence belongs to the complex I subunit 4 family.

Its subcellular location is the plastid. It is found in the chloroplast thylakoid membrane. The catalysed reaction is a plastoquinone + NADH + (n+1) H(+)(in) = a plastoquinol + NAD(+) + n H(+)(out). The enzyme catalyses a plastoquinone + NADPH + (n+1) H(+)(in) = a plastoquinol + NADP(+) + n H(+)(out). In Amborella trichopoda, this protein is NAD(P)H-quinone oxidoreductase chain 4, chloroplastic.